Here is a 189-residue protein sequence, read N- to C-terminus: Phosphoheptose isomerase (189 aa).

The SIS domain maps to 34 to 189; it reads AVETLKNGNK…CQIIDNELSH (156 aa). 49 to 51 contributes to the substrate binding site; the sequence is NGG. The Zn(2+) site is built by H58 and E62. Residues E62, 91 to 92, 117 to 119, S122, and Q169 each bind substrate; these read ND and STS. Zn(2+)-binding residues include Q169 and H177.

Belongs to the SIS family. GmhA subfamily. In terms of assembly, homotetramer. Requires Zn(2+) as cofactor.

The protein resides in the cytoplasm. It catalyses the reaction 2 D-sedoheptulose 7-phosphate = D-glycero-alpha-D-manno-heptose 7-phosphate + D-glycero-beta-D-manno-heptose 7-phosphate. Its pathway is carbohydrate biosynthesis; D-glycero-D-manno-heptose 7-phosphate biosynthesis; D-glycero-alpha-D-manno-heptose 7-phosphate and D-glycero-beta-D-manno-heptose 7-phosphate from sedoheptulose 7-phosphate: step 1/1. Its function is as follows. Catalyzes the isomerization of sedoheptulose 7-phosphate in D-glycero-D-manno-heptose 7-phosphate. This is Phosphoheptose isomerase from Aliarcobacter butzleri (strain RM4018) (Arcobacter butzleri).